Here is a 130-residue protein sequence, read N- to C-terminus: MQTTFTELMQQLFLKLGLNHQVNENDVYTFEVDGHIQVLIACYHQQWVQLFSELGADLPTNDNLFGEHWPAHVQGRLDGKPILWSQQSLVGLDIDEMQAWLERFIDDIEQRKESQNTKFQPNSTSPILFI.

As to quaternary structure, binds to YopT.

Functions as a specific chaperone for YopT. The chain is Chaperone protein SycT (sycT) from Yersinia enterocolitica serotype O:8 / biotype 1B (strain NCTC 13174 / 8081).